The chain runs to 236 residues: Leucyl/phenylalanyl-tRNA--protein transferase (236 aa).

The protein belongs to the L/F-transferase family.

It localises to the cytoplasm. It catalyses the reaction N-terminal L-lysyl-[protein] + L-leucyl-tRNA(Leu) = N-terminal L-leucyl-L-lysyl-[protein] + tRNA(Leu) + H(+). The catalysed reaction is N-terminal L-arginyl-[protein] + L-leucyl-tRNA(Leu) = N-terminal L-leucyl-L-arginyl-[protein] + tRNA(Leu) + H(+). The enzyme catalyses L-phenylalanyl-tRNA(Phe) + an N-terminal L-alpha-aminoacyl-[protein] = an N-terminal L-phenylalanyl-L-alpha-aminoacyl-[protein] + tRNA(Phe). In terms of biological role, functions in the N-end rule pathway of protein degradation where it conjugates Leu, Phe and, less efficiently, Met from aminoacyl-tRNAs to the N-termini of proteins containing an N-terminal arginine or lysine. The chain is Leucyl/phenylalanyl-tRNA--protein transferase from Yersinia enterocolitica serotype O:8 / biotype 1B (strain NCTC 13174 / 8081).